Here is a 417-residue protein sequence, read N- to C-terminus: uncharacterized protein (417 aa).

Disordered regions lie at residues 44-83 (FTNEQNEEDSSNYSTSGYDSSAETISANSSPINRSGVRSR) and 325-346 (VQSARKNQKKGRKNRKVEPPKE). Residues 54–64 (SNYSTSGYDSS) are compositionally biased toward low complexity. Residues 65–76 (AETISANSSPIN) are compositionally biased toward polar residues. The span at 326–339 (QSARKNQKKGRKNR) shows a compositional bias: basic residues. Residues 362–382 (FLIIGVYVLVFIYVCTNVLTV) form a helical membrane-spanning segment.

Its subcellular location is the membrane. This is an uncharacterized protein from Caenorhabditis elegans.